Consider the following 320-residue polypeptide: Cytochrome f (320 aa).

Residues 1 to 35 form the signal peptide; sequence MQTRNTFFWIKEQMTRSISVSIIVYVITQTSISNA. Tyr36, Cys56, Cys59, and His60 together coordinate heme. Residues 286–306 form a helical membrane-spanning segment; it reads VQGLLFFFASVILAQIFLVLK.

Belongs to the cytochrome f family. In terms of assembly, the 4 large subunits of the cytochrome b6-f complex are cytochrome b6, subunit IV (17 kDa polypeptide, petD), cytochrome f and the Rieske protein, while the 4 small subunits are PetG, PetL, PetM and PetN. The complex functions as a dimer. The cofactor is heme.

Its subcellular location is the plastid. The protein localises to the chloroplast thylakoid membrane. Component of the cytochrome b6-f complex, which mediates electron transfer between photosystem II (PSII) and photosystem I (PSI), cyclic electron flow around PSI, and state transitions. This Buxus microphylla (Littleleaf boxwood) protein is Cytochrome f.